The primary structure comprises 160 residues: Nucleotide-binding protein ASA_3207 (160 aa).

The protein belongs to the YajQ family.

Nucleotide-binding protein. This is Nucleotide-binding protein ASA_3207 from Aeromonas salmonicida (strain A449).